Reading from the N-terminus, the 527-residue chain is Plant-specific TFIIB-related protein PTF2 (527 aa).

The TFIIB-type zinc-finger motif lies at 1–30; the sequence is MRCKRCNGSNFERDEDTGNSYCGGCGTLRE.

As to quaternary structure, can form homodimer. Interacts with TBP2. As to expression, expressed in shoot apical meristems, root tips, primordia of lateral roots, inflorescences, developing pollen grains and embryos.

The protein resides in the nucleus. Plant-specific TFIIB-related protein that plays important roles in pollen germination and embryogenesis, possibly by regulating gene expression through interaction with TBP2 and the subunits of RNA polymerases. Binds double-stranded DNA in vitro. This chain is Plant-specific TFIIB-related protein PTF2, found in Arabidopsis thaliana (Mouse-ear cress).